Here is a 189-residue protein sequence, read N- to C-terminus: Apolipoprotein D (189 aa).

An N-terminal signal peptide occupies residues 1-20 (MGMMLLLLSMLAGLVAEAEG). Residue Gln-21 is modified to Pyrrolidone carboxylic acid. 2 disulfide bridges follow: Cys-28–Cys-134 and Cys-61–Cys-185. N-linked (GlcNAc...) asparagine glycans are attached at residues Asn-65 and Asn-98.

Belongs to the calycin superfamily. Lipocalin family. As to quaternary structure, homodimer.

It is found in the secreted. Functionally, APOD occurs in the macromolecular complex with lecithin-transport and binding of bilin. Appears to be able to transport a variety of ligands in a number of different contexts. The protein is Apolipoprotein D (APOD) of Cavia porcellus (Guinea pig).